A 25-amino-acid polypeptide reads, in one-letter code: Antifungal protein 1 (25 aa).

Residues 1 to 25 (QSERFEQQMQGQDFSHDERFLSQAA) form a disordered region. Positions 14–25 (FSHDERFLSQAA) are enriched in basic and acidic residues.

Belongs to the 2S seed storage albumins family. As to expression, expressed in seed (at protein level). Not detected in pulp, stems and leaves.

Its function is as follows. Has strong antifungal activity against T.harzianum, F.oxysporum and A.fumigatus with IC(50) values of 32 ug/ml, 34 ug/ml and 40 ug/ml, restectively. Lacks antifungal activity against R.solani, P.brasiliensis and C.albicans. This is Antifungal protein 1 from Passiflora edulis (Passion fruit).